The primary structure comprises 376 residues: Protein-tyrosine sulfotransferase 2 (376 aa).

The Cytoplasmic portion of the chain corresponds to 1-8 (MRLSVRKV). A helical; Signal-anchor for type II membrane protein transmembrane segment spans residues 9–25 (LLAVGCALALVLAVQLG). Residues 26 to 376 (QQVLECRAVL…NSTSPHLGSS (351 aa)) lie on the Lumenal side of the membrane. Residue 77–81 (RSGTT) coordinates 3'-phosphoadenylyl sulfate. A disulfide bridge connects residues cysteine 95 and cysteine 155. The active-site Proton donor/acceptor is the glutamate 98. Residues 100–104 (RIIPR) form an interaction with peptide substrate region. The 3'-phosphoadenylyl sulfate site is built by arginine 182, serine 190, and arginine 194. A disulfide bridge connects residues cysteine 224 and cysteine 232. Residues tyrosine 237, 284 to 293 (STDQVIKPVN), and lysine 299 each bind 3'-phosphoadenylyl sulfate. N-linked (GlcNAc...) asparagine glycosylation is found at asparagine 342 and asparagine 367.

Belongs to the protein sulfotransferase family. As to quaternary structure, homodimer. Can also form heterodimers with TPST1. In terms of processing, N-glycosylated.

Its subcellular location is the golgi apparatus membrane. The enzyme catalyses L-tyrosyl-[protein] + 3'-phosphoadenylyl sulfate = O-sulfo-L-tyrosine-[protein] + adenosine 3',5'-bisphosphate + H(+). In terms of biological role, catalyzes the O-sulfation of tyrosine residues within acidic motifs of polypeptides, using 3'-phosphoadenylyl sulfate (PAPS) as cosubstrate. This chain is Protein-tyrosine sulfotransferase 2 (Tpst2), found in Rattus norvegicus (Rat).